The chain runs to 436 residues: Histidinol dehydrogenase (436 aa).

Substrate is bound by residues Ser-237, Gln-259, and His-262. Zn(2+) is bound by residues Gln-259 and His-262. Residues Glu-327 and His-328 each act as proton acceptor in the active site. Substrate contacts are provided by His-328, Asp-361, Glu-415, and His-420. Asp-361 is a binding site for Zn(2+). His-420 is a Zn(2+) binding site.

It belongs to the histidinol dehydrogenase family. Requires Zn(2+) as cofactor.

The catalysed reaction is L-histidinol + 2 NAD(+) + H2O = L-histidine + 2 NADH + 3 H(+). The protein operates within amino-acid biosynthesis; L-histidine biosynthesis; L-histidine from 5-phospho-alpha-D-ribose 1-diphosphate: step 9/9. Catalyzes the sequential NAD-dependent oxidations of L-histidinol to L-histidinaldehyde and then to L-histidine. In Helicobacter hepaticus (strain ATCC 51449 / 3B1), this protein is Histidinol dehydrogenase.